Consider the following 278-residue polypeptide: DegV domain-containing protein YejH (278 aa).

The region spanning 3–277 (IKIVTDSSIT…PGAWAIMIDY (275 aa)) is the DegV domain. The hexadecanoate site is built by threonine 60 and serine 92.

May bind long-chain fatty acids, such as palmitate, and may play a role in lipid transport or fatty acid metabolism. The protein is DegV domain-containing protein YejH (yejH) of Lactococcus lactis subsp. lactis (strain IL1403) (Streptococcus lactis).